The sequence spans 238 residues: tRNA (guanine-N(1)-)-methyltransferase (238 aa).

Residues Gly-112 and 131-136 contribute to the S-adenosyl-L-methionine site; that span reads LGDFIL.

This sequence belongs to the RNA methyltransferase TrmD family. Homodimer.

It localises to the cytoplasm. It carries out the reaction guanosine(37) in tRNA + S-adenosyl-L-methionine = N(1)-methylguanosine(37) in tRNA + S-adenosyl-L-homocysteine + H(+). Specifically methylates guanosine-37 in various tRNAs. The sequence is that of tRNA (guanine-N(1)-)-methyltransferase from Nostoc punctiforme (strain ATCC 29133 / PCC 73102).